The sequence spans 331 residues: Polyprenyl transferase mpaA' (331 aa).

The next 8 helical transmembrane spans lie at 27-47, 56-76, 127-147, 159-179, 190-210, 240-260, 264-284, and 295-315; these read MPYY…ALKL, IEFI…LCGA, LILD…SIML, VFVY…ITGW, GDII…CVYF, LFLA…ISTI, WLWV…IAQF, and IHWD…VEVG.

Belongs to the UbiA prenyltransferase family. The cofactor is Mg(2+).

It localises to the golgi apparatus membrane. The catalysed reaction is 5,7-dihydroxy-4-methylphthalide + (2E,6E)-farnesyl diphosphate = 4-farnesyl-3,5-dihydroxy-6-methylphthalide + diphosphate. The protein operates within secondary metabolite biosynthesis; terpenoid biosynthesis. Functionally, polyprenyl transferase; part of the gene cluster that mediates the biosynthesis of mycophenolic acid (MPA), the first isolated antibiotic natural product in the world obtained from a culture of Penicillium brevicompactum in 1893. MpaA' is a Golgi apparatus-associated enzyme that catalyzes the prenylation of 5,7-dihydroxy-4,6-dimethylphthalide (DHMP) to yield farnesyl-DHMP (FDHMP). The first step of the pathway is the synthesis of 5-methylorsellinic acid (5MOA) by the cytosolic polyketide synthase mpaC. 5MOA is then converted to the phthalide compound 5,7-dihydroxy-4,6-dimethylphthalide (DHMP) by the endoplasmic reticulum-bound cytochrome P450 monooxygenase mpaDE. MpaDE first catalyzes hydroxylation of 5-MOA to 4,6-dihydroxy-2-(hydroxymethyl)-3-methylbenzoic acid (DHMB). MpaDE then acts as a lactone synthase that catalyzes the ring closure to convert DHMB into DHMP. The next step is the prenylation of DHMP by the Golgi apparatus-associated prenyltransferase mpaA to yield farnesyl-DHMP (FDHMP). The ER-bound oxygenase mpaB then mediates the oxidative cleavage the C19-C20 double bond in FDHMP to yield FDHMP-3C via a mycophenolic aldehyde intermediate. The O-methyltransferase mpaG catalyzes the methylation of FDHMP-3C to yield MFDHMP-3C. After the cytosolic methylation of FDHMP-3C, MFDHMP-3C enters into peroxisomes probably via free diffusion due to its low molecular weight. Upon a peroxisomal CoA ligation reaction, catalyzed by a beta-oxidation component enzyme acyl-CoA ligase ACL891, MFDHMP-3C-CoA would then be restricted to peroxisomes for the following beta-oxidation pathway steps. The peroxisomal beta-oxidation machinery than converts MFDHMP-3C-CoA into MPA_CoA, via a beta-oxidation chain-shortening process. Finally mpaH acts as a peroxisomal acyl-CoA hydrolase with high substrate specificity toward MPA-CoA to release the final product MPA. The chain is Polyprenyl transferase mpaA' from Penicillium brevicompactum.